The primary structure comprises 325 residues: Lipoyl synthase (325 aa).

The tract at residues 1 to 24 (MPIAPDRVRHPEKANRPDNPIQRK) is disordered. Residues Cys-54, Cys-59, Cys-65, Cys-80, Cys-84, Cys-87, and Ser-293 each contribute to the [4Fe-4S] cluster site. Residues 66-282 (WKKKHATFMI…VTVGRGKGFL (217 aa)) enclose the Radical SAM core domain.

This sequence belongs to the radical SAM superfamily. Lipoyl synthase family. It depends on [4Fe-4S] cluster as a cofactor.

It localises to the cytoplasm. The catalysed reaction is [[Fe-S] cluster scaffold protein carrying a second [4Fe-4S](2+) cluster] + N(6)-octanoyl-L-lysyl-[protein] + 2 oxidized [2Fe-2S]-[ferredoxin] + 2 S-adenosyl-L-methionine + 4 H(+) = [[Fe-S] cluster scaffold protein] + N(6)-[(R)-dihydrolipoyl]-L-lysyl-[protein] + 4 Fe(3+) + 2 hydrogen sulfide + 2 5'-deoxyadenosine + 2 L-methionine + 2 reduced [2Fe-2S]-[ferredoxin]. It participates in protein modification; protein lipoylation via endogenous pathway; protein N(6)-(lipoyl)lysine from octanoyl-[acyl-carrier-protein]: step 2/2. In terms of biological role, catalyzes the radical-mediated insertion of two sulfur atoms into the C-6 and C-8 positions of the octanoyl moiety bound to the lipoyl domains of lipoate-dependent enzymes, thereby converting the octanoylated domains into lipoylated derivatives. The chain is Lipoyl synthase from Rhodospirillum centenum (strain ATCC 51521 / SW).